The chain runs to 413 residues: Serine hydroxymethyltransferase (413 aa).

Residues L115 and 119-121 contribute to the (6S)-5,6,7,8-tetrahydrofolate site; that span reads GHL. K224 is modified (N6-(pyridoxal phosphate)lysine).

It belongs to the SHMT family. As to quaternary structure, homodimer. The cofactor is pyridoxal 5'-phosphate.

The protein resides in the cytoplasm. It catalyses the reaction (6R)-5,10-methylene-5,6,7,8-tetrahydrofolate + glycine + H2O = (6S)-5,6,7,8-tetrahydrofolate + L-serine. The protein operates within one-carbon metabolism; tetrahydrofolate interconversion. Its pathway is amino-acid biosynthesis; glycine biosynthesis; glycine from L-serine: step 1/1. Catalyzes the reversible interconversion of serine and glycine with tetrahydrofolate (THF) serving as the one-carbon carrier. This reaction serves as the major source of one-carbon groups required for the biosynthesis of purines, thymidylate, methionine, and other important biomolecules. Also exhibits THF-independent aldolase activity toward beta-hydroxyamino acids, producing glycine and aldehydes, via a retro-aldol mechanism. The polypeptide is Serine hydroxymethyltransferase (Mycoplasma capricolum subsp. capricolum (strain California kid / ATCC 27343 / NCTC 10154)).